Reading from the N-terminus, the 79-residue chain is MPKRLSGLQKEVLHLYRASIRTAHTKPKENQVNFVNYIHEEFGKYRNLPRKDFTTIEHLLRVGNKKIATFSHPELTNIH.

This sequence belongs to the complex I LYR family. SDHAF1 subfamily. As to quaternary structure, interacts with SDH2 within an SDH1-SDH2 subcomplex.

The protein resides in the mitochondrion matrix. Functionally, plays an essential role in the assembly of succinate dehydrogenase (SDH), an enzyme complex (also referred to as respiratory complex II) that is a component of both the tricarboxylic acid (TCA) cycle and the mitochondrial electron transport chain, and which couples the oxidation of succinate to fumarate with the reduction of ubiquinone (coenzyme Q) to ubiquinol. Promotes maturation of the iron-sulfur protein subunit SDH2 of the SDH catalytic dimer, protecting it from the deleterious effects of oxidants. Acts together with SDHAF3 (SDH7). In Saccharomyces cerevisiae (strain YJM789) (Baker's yeast), this protein is Succinate dehydrogenase assembly factor 1, mitochondrial.